The primary structure comprises 132 residues: UPF0292 protein PH1700 (132 aa).

Residues 20–100 (EGAIIVEGAR…KVDTETRREL (81 aa)) form the Toprim domain. Residues E26, D69, and D71 each contribute to the Mg(2+) site.

It belongs to the UPF0292 family. Mg(2+) is required as a cofactor.

This Pyrococcus horikoshii (strain ATCC 700860 / DSM 12428 / JCM 9974 / NBRC 100139 / OT-3) protein is UPF0292 protein PH1700.